The chain runs to 732 residues: Zinc-exporting P-type ATPase (732 aa).

One can recognise an HMA domain in the interval 29–96; that stretch reads GRMRVRADWV…AIGGAKHVAA (68 aa). The next 6 membrane-spanning stretches (helical) occupy residues 105–123, 146–164, 172–186, 195–209, 342–366, and 372–390; these read HSTE…GGAA, MVAT…RGAL, AGTD…IASL, LTVL…YLQD, VGEN…LVTG, and MTML…TPTA. Residue Asp-423 is the 4-aspartylphosphate intermediate of the active site. Mg(2+) contacts are provided by Asp-423, Thr-425, and Asp-625. 2 consecutive transmembrane segments (helical) span residues 676 to 695 and 705 to 724; these read AVDV…AAGL and PVLA…ANSS.

Belongs to the cation transport ATPase (P-type) (TC 3.A.3) family. Type IB subfamily.

Its subcellular location is the cell membrane. The enzyme catalyses Zn(2+)(in) + ATP + H2O = Zn(2+)(out) + ADP + phosphate + H(+). Functionally, zn(2+) efflux transporter which is involved in detoxification of zinc during infection. The sequence is that of Zinc-exporting P-type ATPase from Mycobacterium marinum (strain ATCC BAA-535 / M).